Here is a 248-residue protein sequence, read N- to C-terminus: Pulmonary surfactant-associated protein A (248 aa).

A signal peptide spans 1–17; it reads MLLCSLTLMLLWMVASG. The 73-residue stretch at 28 to 100 folds into the Collagen-like domain; that stretch reads GSPGIPGTPG…PGERGPPGFP (73 aa). Residues 29–103 form a disordered region; it reads SPGIPGTPGS…RGPPGFPAYL (75 aa). The span at 42 to 51 shows a compositional bias: basic and acidic residues; sequence PGRDGRDGIK. Positions 54–65 are enriched in pro residues; sequence PGPPGPMGPPGG. The segment covering 69–82 has biased composition (low complexity); the sequence is LPGRDGMTGAPGLP. The segment covering 84–93 has biased composition (basic and acidic residues); sequence ERGEKGEPGE. In terms of domain architecture, C-type lectin spans 127–247; the sequence is LQGSMLEVGE…CLQYRLAICE (121 aa). 2 cysteine pairs are disulfide-bonded: C155/C246 and C224/C238. N-linked (GlcNAc...) asparagine glycosylation is present at N207. 4 residues coordinate Ca(2+): E215, R217, N234, and D235.

The protein belongs to the SFTPA family. Oligomeric complex of 6 set of homotrimers.

It is found in the secreted. The protein localises to the extracellular space. The protein resides in the extracellular matrix. It localises to the surface film. In terms of biological role, in presence of calcium ions, it binds to surfactant phospholipids and contributes to lower the surface tension at the air-liquid interface in the alveoli of the mammalian lung and is essential for normal respiration. Enhances the expression of MYO18A/SP-R210 on alveolar macrophages. The polypeptide is Pulmonary surfactant-associated protein A (SFTPA1) (Ovis aries (Sheep)).